The following is a 486-amino-acid chain: Bifunctional protein HldE (486 aa).

Residues 1–331 (MSTNVADLLH…NALTAESVPV (331 aa)) are ribokinase. 207-210 (NLGE) serves as a coordination point for ATP. Aspartate 276 is an active-site residue. Positions 358–486 (VTNGCFDLLH…STTKLIEKGH (129 aa)) are cytidylyltransferase.

In the N-terminal section; belongs to the carbohydrate kinase PfkB family. This sequence in the C-terminal section; belongs to the cytidylyltransferase family. In terms of assembly, homodimer.

The catalysed reaction is D-glycero-beta-D-manno-heptose 7-phosphate + ATP = D-glycero-beta-D-manno-heptose 1,7-bisphosphate + ADP + H(+). The enzyme catalyses D-glycero-beta-D-manno-heptose 1-phosphate + ATP + H(+) = ADP-D-glycero-beta-D-manno-heptose + diphosphate. It participates in nucleotide-sugar biosynthesis; ADP-L-glycero-beta-D-manno-heptose biosynthesis; ADP-L-glycero-beta-D-manno-heptose from D-glycero-beta-D-manno-heptose 7-phosphate: step 1/4. It functions in the pathway nucleotide-sugar biosynthesis; ADP-L-glycero-beta-D-manno-heptose biosynthesis; ADP-L-glycero-beta-D-manno-heptose from D-glycero-beta-D-manno-heptose 7-phosphate: step 3/4. Catalyzes the phosphorylation of D-glycero-D-manno-heptose 7-phosphate at the C-1 position to selectively form D-glycero-beta-D-manno-heptose-1,7-bisphosphate. Functionally, catalyzes the ADP transfer from ATP to D-glycero-beta-D-manno-heptose 1-phosphate, yielding ADP-D-glycero-beta-D-manno-heptose. The protein is Bifunctional protein HldE of Koribacter versatilis (strain Ellin345).